The following is a 128-amino-acid chain: Phosphoribosyl-AMP cyclohydrolase (128 aa).

Aspartate 86 contributes to the Mg(2+) binding site. Cysteine 87 provides a ligand contact to Zn(2+). Positions 88 and 90 each coordinate Mg(2+). Zn(2+) is bound by residues cysteine 103 and cysteine 110.

This sequence belongs to the PRA-CH family. In terms of assembly, homodimer. Mg(2+) serves as cofactor. The cofactor is Zn(2+).

It localises to the cytoplasm. It carries out the reaction 1-(5-phospho-beta-D-ribosyl)-5'-AMP + H2O = 1-(5-phospho-beta-D-ribosyl)-5-[(5-phospho-beta-D-ribosylamino)methylideneamino]imidazole-4-carboxamide. It participates in amino-acid biosynthesis; L-histidine biosynthesis; L-histidine from 5-phospho-alpha-D-ribose 1-diphosphate: step 3/9. Its function is as follows. Catalyzes the hydrolysis of the adenine ring of phosphoribosyl-AMP. This chain is Phosphoribosyl-AMP cyclohydrolase, found in Roseobacter denitrificans (strain ATCC 33942 / OCh 114) (Erythrobacter sp. (strain OCh 114)).